A 655-amino-acid polypeptide reads, in one-letter code: Broad substrate specificity ATP-binding cassette transporter ABCG2 (655 aa).

Residues 1-395 lie on the Cytoplasmic side of the membrane; the sequence is MSSSNVEVFI…KNLLGNPQAS (395 aa). The ABC transporter domain maps to 37–286; the sequence is LSFHNICYRV…FESAGYHCEA (250 aa). Residues 80-87, 184-190, E211, and H243 contribute to the ATP site; these read GPTGGGKS and RGVSGGE. T362 bears the Phosphothreonine; by PIM1 mark. Residues 389 to 651 enclose the ABC transmembrane type-2 domain; sequence LGNPQASIAQ…TIAYLKLLFL (263 aa). A helical membrane pass occupies residues 396–416; that stretch reads IAQIIVTVVLGLVIGAIYFGL. The Extracellular segment spans residues 417-428; sequence KNDSTGIQNRAG. The chain crosses the membrane as a helical span at residues 429 to 449; it reads VLFFLTTNQCFSSVSAVELFV. The Cytoplasmic segment spans residues 450-477; that stretch reads VEKKLFIHEYISGYYRVSSYFLGKLLSD. A helical membrane pass occupies residues 478-498; it reads LLPMRMLPSIIFTCIVYFMLG. Residues 499-506 lie on the Extracellular side of the membrane; sequence LKPKADAF. A helical transmembrane segment spans residues 507–527; sequence FVMMFTLMMVAYSASSMALAI. At 528 to 535 the chain is on the cytoplasmic side; that stretch reads AAGQSVVS. A helical membrane pass occupies residues 536 to 556; the sequence is VATLLMTICFVFMMIFSGLLV. The Extracellular portion of the chain corresponds to 557-630; it reads NLTTIASWLS…LSPWGLWKNH (74 aa). A disulfide bridge links C592 with C608. The N-linked (GlcNAc...) asparagine glycan is linked to N596. The chain crosses the membrane as a helical span at residues 631 to 651; that stretch reads VALACMIVIFLTIAYLKLLFL. The Cytoplasmic portion of the chain corresponds to 652 to 655; it reads KKYS.

It belongs to the ABC transporter superfamily. ABCG family. Eye pigment precursor importer (TC 3.A.1.204) subfamily. Homodimer; disulfide-linked. The minimal functional unit is a homodimer, but the major oligomeric form in plasma membrane is a homotetramer with possibility of higher order oligomerization up to homododecamers. N-glycosylated. Glycosylation-deficient ABCG2 is normally expressed and functional. Post-translationally, phosphorylated. Phosphorylation at Thr-362 by PIM1 is induced by drugs like mitoxantrone and is associated with cells increased drug resistance. It regulates the localization to the plasma membrane, the homooligomerization and therefore, the activity of the transporter. In terms of tissue distribution, highly expressed in placenta. Low expression in small intestine, liver and colon. Expressed in brain (at protein level).

It localises to the cell membrane. Its subcellular location is the apical cell membrane. It is found in the mitochondrion membrane. The catalysed reaction is ATP + H2O + xenobioticSide 1 = ADP + phosphate + xenobioticSide 2.. It catalyses the reaction urate(in) + ATP + H2O = urate(out) + ADP + phosphate + H(+). The enzyme catalyses indoxyl sulfate(in) + ATP + H2O = indoxyl sulfate(out) + ADP + phosphate + H(+). It carries out the reaction sphing-4-enine 1-phosphate(in) + ATP + H2O = sphing-4-enine 1-phosphate(out) + ADP + phosphate + H(+). The catalysed reaction is estrone 3-sulfate(in) + ATP + H2O = estrone 3-sulfate(out) + ADP + phosphate + H(+). It catalyses the reaction dehydroepiandrosterone 3-sulfate(in) + ATP + H2O = dehydroepiandrosterone 3-sulfate(out) + ADP + phosphate + H(+). The enzyme catalyses 4-methylumbelliferone sulfate(in) + ATP + H2O = 4-methylumbelliferone sulfate(out) + ADP + phosphate + H(+). It carries out the reaction 5,7-dimethyl-2-methylamino-4-(3-pyridylmethyl)-1,3-benzothiazol-6-yl beta-D-glucuronate(in) + ATP + H2O = 5,7-dimethyl-2-methylamino-4-(3-pyridylmethyl)-1,3-benzothiazol-6-yl beta-D-glucuronate(out) + ADP + phosphate + H(+). The catalysed reaction is 4-methylumbelliferone beta-D-glucuronate(in) + ATP + H2O = 4-methylumbelliferone beta-D-glucuronate(out) + ADP + phosphate + H(+). It catalyses the reaction 5,7-dimethyl-2-methylamino-4-(3-pyridylmethyl)-1,3-benzothiazol-6-yl sulfate(in) + ATP + H2O = 5,7-dimethyl-2-methylamino-4-(3-pyridylmethyl)-1,3-benzothiazol-6-yl sulfate(out) + ADP + phosphate + H(+). The enzyme catalyses 17beta-estradiol 17-O-(beta-D-glucuronate)(in) + ATP + H2O = 17beta-estradiol 17-O-(beta-D-glucuronate)(out) + ADP + phosphate + H(+). It carries out the reaction methotrexate(in) + ATP + H2O = methotrexate(out) + ADP + phosphate + H(+). The catalysed reaction is riboflavin(in) + ATP + H2O = riboflavin(out) + ADP + phosphate + H(+). It catalyses the reaction pheophorbide a(in) + ATP + H2O = pheophorbide a(out) + ADP + phosphate + H(+). The enzyme catalyses itaconate(in) + ATP + H2O = itaconate(out) + ADP + phosphate + H(+). Specifically inhibited by the fungal toxin fumitremorgin C and Ko143. Functionally, broad substrate specificity ATP-dependent transporter of the ATP-binding cassette (ABC) family that actively extrudes a wide variety of physiological compounds, dietary toxins and xenobiotics from cells. Involved in porphyrin homeostasis, mediating the export of protoporphyrin IX (PPIX) from both mitochondria to cytosol and cytosol to extracellular space, it also functions in the cellular export of heme. Also mediates the efflux of sphingosine-1-P from cells. Acts as a urate exporter functioning in both renal and extrarenal urate excretion. In kidney, it also functions as a physiological exporter of the uremic toxin indoxyl sulfate. Also involved in the excretion of steroids like estrone 3-sulfate/E1S, 3beta-sulfooxy-androst-5-en-17-one/DHEAS, and other sulfate conjugates. Mediates the secretion of the riboflavin and biotin vitamins into milk. Extrudes pheophorbide a, a phototoxic porphyrin catabolite of chlorophyll, reducing its bioavailability. Plays an important role in the exclusion of xenobiotics from the brain. It confers to cells a resistance to multiple drugs and other xenobiotics including mitoxantrone, pheophorbide, camptothecin, methotrexate, azidothymidine, and the anthracyclines daunorubicin and doxorubicin, through the control of their efflux. In placenta, it limits the penetration of drugs from the maternal plasma into the fetus. May play a role in early stem cell self-renewal by blocking differentiation. In inflammatory macrophages, exports itaconate from the cytosol to the extracellular compartment and limits the activation of TFEB-dependent lysosome biogenesis involved in antibacterial innate immune response. This is Broad substrate specificity ATP-binding cassette transporter ABCG2 (ABCG2) from Homo sapiens (Human).